Consider the following 886-residue polypeptide: DNA mismatch repair protein MutS (886 aa).

627-634 contacts ATP; sequence GPNMGGKS. Residues 834–857 form a disordered region; the sequence is VECADAPAPSDATHPALDRLRDID.

This sequence belongs to the DNA mismatch repair MutS family.

Functionally, this protein is involved in the repair of mismatches in DNA. It is possible that it carries out the mismatch recognition step. This protein has a weak ATPase activity. In Burkholderia vietnamiensis (strain G4 / LMG 22486) (Burkholderia cepacia (strain R1808)), this protein is DNA mismatch repair protein MutS.